The following is a 592-amino-acid chain: MANYTKTAILSVYDKTGLLDLARGLIEKNVRILASGGTARMIRDAGFPIEDVSAITHAPEMLGGRVKTLHPAVHGGILARDIDSDEKDLKEQHIEKVDYVVCNLYPFKETVAKVGVTIPEAVEEIDIGGVTLLRAAAKNHARVTILSDPKDYSEFLSELSSNGEISQDLRNRLALKAFEHTADYDAAISDFFRKQYSEGQAQITLRYGANPHQKPAQAYVSQQDSLPFKVLCGSPGYINLLDALNSWPLVKELSASLNLPAAASFKHVSPAGAAVGIPLSDVEKQVYFVADIENLSPLACAYARARGADRMSSFGDWIALSNIVDVPTAKIISREVSDGVIAPGYEPEALAILSKKKGGKYCILQIDPNYVPEAVERRQVYGVTLEQKRNDAIINQSTFKEIVSQNKNLTEQAIIDLTVATIAIKYTQSNSVCYARNGMVVGLGAGQQSRIHCTRLAGDKADNWWFRQHPRVLEIKWAKGVKRPEKSNAIDLFVTGQIPTEEPELSEYQSKFEEIPKPFTPEERKEWLSKLTNVSLSSDAFFPFPDNVYRAVKSGVKYIAAPSGSVMDKVVFSAADSFDLVYVENPIRLFHH.

An MGS-like domain is found at 1-147; sequence MANYTKTAIL…KNHARVTILS (147 aa). IMP is bound by residues 35–38, 65–68, 102–103, and 126–127; these read SGGT, RVKT, CN, and DI. The Proton donor/acceptor; for FAICAR cyclization activity role is filled by K138. 5-amino-1-(5-phospho-beta-D-ribosyl)imidazole-4-carboxamide contacts are provided by residues 206–207, H267, G315, D338, N430, and R450; that span reads RY. H267 functions as the Proton acceptor; for AICAR formyltransferase activity in the catalytic mechanism. I451 provides a ligand contact to (6R)-10-formyltetrahydrofolate. F541 serves as a coordination point for 5-amino-1-(5-phospho-beta-D-ribosyl)imidazole-4-carboxamide. (6R)-10-formyltetrahydrofolate is bound by residues D546 and 565–566; that span reads SV. A 5-amino-1-(5-phospho-beta-D-ribosyl)imidazole-4-carboxamide-binding site is contributed by R588.

Belongs to the PurH family. As to quaternary structure, homodimer.

It is found in the cytoplasm. Its subcellular location is the cytosol. The catalysed reaction is (6R)-10-formyltetrahydrofolate + 5-amino-1-(5-phospho-beta-D-ribosyl)imidazole-4-carboxamide = 5-formamido-1-(5-phospho-D-ribosyl)imidazole-4-carboxamide + (6S)-5,6,7,8-tetrahydrofolate. It catalyses the reaction IMP + H2O = 5-formamido-1-(5-phospho-D-ribosyl)imidazole-4-carboxamide. The protein operates within purine metabolism; IMP biosynthesis via de novo pathway; 5-formamido-1-(5-phospho-D-ribosyl)imidazole-4-carboxamide from 5-amino-1-(5-phospho-D-ribosyl)imidazole-4-carboxamide (10-formyl THF route): step 1/1. It participates in purine metabolism; IMP biosynthesis via de novo pathway; IMP from 5-formamido-1-(5-phospho-D-ribosyl)imidazole-4-carboxamide: step 1/1. Bifunctional enzyme that catalyzes the last two steps of purine biosynthesis. Acts as a transformylase that incorporates a formyl group to the AMP analog AICAR (5-amino-1-(5-phospho-beta-D-ribosyl)imidazole-4-carboxamide) to produce the intermediate formyl-AICAR (FAICAR). Also catalyzes the cyclization of FAICAR to IMP. This Saccharomyces cerevisiae (strain ATCC 204508 / S288c) (Baker's yeast) protein is Bifunctional purine biosynthesis protein ADE17.